A 126-amino-acid chain; its full sequence is Large ribosomal subunit protein bL12 (126 aa).

It belongs to the bacterial ribosomal protein bL12 family. Homodimer. Part of the ribosomal stalk of the 50S ribosomal subunit. Forms a multimeric L10(L12)X complex, where L10 forms an elongated spine to which 2 to 4 L12 dimers bind in a sequential fashion. Binds GTP-bound translation factors.

Its function is as follows. Forms part of the ribosomal stalk which helps the ribosome interact with GTP-bound translation factors. Is thus essential for accurate translation. This chain is Large ribosomal subunit protein bL12, found in Trichlorobacter lovleyi (strain ATCC BAA-1151 / DSM 17278 / SZ) (Geobacter lovleyi).